Here is a 424-residue protein sequence, read N- to C-terminus: Serine--tRNA ligase (424 aa).

230-232 contributes to the L-serine binding site; the sequence is TAE. ATP is bound at residue 261 to 263; the sequence is RSE. L-serine is bound at residue Glu284. 348–351 is a binding site for ATP; it reads EISS. Ser384 is an L-serine binding site.

This sequence belongs to the class-II aminoacyl-tRNA synthetase family. Type-1 seryl-tRNA synthetase subfamily. As to quaternary structure, homodimer. The tRNA molecule binds across the dimer.

The protein resides in the cytoplasm. The enzyme catalyses tRNA(Ser) + L-serine + ATP = L-seryl-tRNA(Ser) + AMP + diphosphate + H(+). It carries out the reaction tRNA(Sec) + L-serine + ATP = L-seryl-tRNA(Sec) + AMP + diphosphate + H(+). Its pathway is aminoacyl-tRNA biosynthesis; selenocysteinyl-tRNA(Sec) biosynthesis; L-seryl-tRNA(Sec) from L-serine and tRNA(Sec): step 1/1. In terms of biological role, catalyzes the attachment of serine to tRNA(Ser). Is also able to aminoacylate tRNA(Sec) with serine, to form the misacylated tRNA L-seryl-tRNA(Sec), which will be further converted into selenocysteinyl-tRNA(Sec). In Streptococcus pneumoniae serotype 4 (strain ATCC BAA-334 / TIGR4), this protein is Serine--tRNA ligase.